Reading from the N-terminus, the 225-residue chain is Ribonuclease 3 (225 aa).

The region spanning 5 to 127 is the RNase III domain; that stretch reads LERLQRQIGY…IIGAISLDSD (123 aa). Glutamate 40 serves as a coordination point for Mg(2+). Aspartate 44 is an active-site residue. Positions 113 and 116 each coordinate Mg(2+). Glutamate 116 is an active-site residue. One can recognise a DRBM domain in the interval 154-224; the sequence is DPKTRLQEYL…AEKILQLLEM (71 aa).

Belongs to the ribonuclease III family. Homodimer. Mg(2+) serves as cofactor.

It localises to the cytoplasm. The catalysed reaction is Endonucleolytic cleavage to 5'-phosphomonoester.. Functionally, digests double-stranded RNA. Involved in the processing of primary rRNA transcript to yield the immediate precursors to the large and small rRNAs (23S and 16S). Also processes some mRNAs, and tRNAs when they are encoded in the rRNA operon. CRISPR (clustered regularly interspaced short palindromic repeat) is an adaptive immune system that provides protection against mobile genetic elements (viruses, transposable elements and conjugative plasmids). CRISPR clusters contain spacers, sequences complementary to antecedent mobile elements, and target invading nucleic acids. CRISPR clusters are transcribed and processed into CRISPR RNA (crRNA). In this organism endogenous ribonuclease 3 and Cas9 are required for correct coprocessing of pre-crRNA and the trans-encoded small RNA (tracrRNA). Cas9, crRNA and tracrRNA are required for cleavage of invading DNA. Complements pre-crRNA and tracrRNA coprocessing defects in an rnc deletion in S.pyogenes strain 370. This is Ribonuclease 3 from Pasteurella multocida (strain Pm70).